Here is a 670-residue protein sequence, read N- to C-terminus: DNA ligase (670 aa).

NAD(+) is bound by residues 34 to 38 (DAEYD), 83 to 84 (SL), and Glu112. Lys114 functions as the N6-AMP-lysine intermediate in the catalytic mechanism. Residues Arg135, Glu169, Lys285, and Lys309 each coordinate NAD(+). The Zn(2+) site is built by Cys403, Cys406, Cys421, and Cys426. The BRCT domain maps to 589–670 (PASSVLAGKT…FLQEISREEQ (82 aa)).

This sequence belongs to the NAD-dependent DNA ligase family. LigA subfamily. The cofactor is Mg(2+). Requires Mn(2+) as cofactor.

It catalyses the reaction NAD(+) + (deoxyribonucleotide)n-3'-hydroxyl + 5'-phospho-(deoxyribonucleotide)m = (deoxyribonucleotide)n+m + AMP + beta-nicotinamide D-nucleotide.. Its function is as follows. DNA ligase that catalyzes the formation of phosphodiester linkages between 5'-phosphoryl and 3'-hydroxyl groups in double-stranded DNA using NAD as a coenzyme and as the energy source for the reaction. It is essential for DNA replication and repair of damaged DNA. The polypeptide is DNA ligase (Geobacillus thermodenitrificans (strain NG80-2)).